Consider the following 34-residue polypeptide: Turripeptide OL127 (34 aa).

Post-translationally, contains 4 disulfide bonds. Expressed by the venom duct.

It is found in the secreted. Its function is as follows. Acts as a neurotoxin by inhibiting an ion channel. This chain is Turripeptide OL127, found in Iotyrris olangoensis (Sea snail).